The following is a 795-amino-acid chain: Phenylalanine--tRNA ligase beta subunit (795 aa).

Residues 39 to 148 enclose the tRNA-binding domain; the sequence is AAEFNGVVIG…LDAPLGTDLR (110 aa). In terms of domain architecture, B5 spans 401–476; that stretch reads PKPAQILLRR…RIYGYNNIPN (76 aa). Residues Asp454, Asp460, Glu463, and Glu464 each coordinate Mg(2+). An FDX-ACB domain is found at 701–794; the sequence is SKFPANRRDI…LKTEFNASLR (94 aa).

Belongs to the phenylalanyl-tRNA synthetase beta subunit family. Type 1 subfamily. As to quaternary structure, tetramer of two alpha and two beta subunits. Mg(2+) serves as cofactor.

It is found in the cytoplasm. The catalysed reaction is tRNA(Phe) + L-phenylalanine + ATP = L-phenylalanyl-tRNA(Phe) + AMP + diphosphate + H(+). The sequence is that of Phenylalanine--tRNA ligase beta subunit from Shewanella oneidensis (strain ATCC 700550 / JCM 31522 / CIP 106686 / LMG 19005 / NCIMB 14063 / MR-1).